The following is an 857-amino-acid chain: Autoinducer 2 sensor kinase/phosphatase LuxQ (857 aa).

2 consecutive transmembrane segments (helical) span residues 20–40 (IIFL…YYFS) and 283–303 (LGLA…RSWI). The 223-residue stretch at 490–712 (KMSHEIRTPL…TFYLSIPVEK (223 aa)) folds into the Histidine kinase domain. A Phosphohistidine; by autocatalysis modification is found at His493. A Response regulatory domain is found at 735 to 850 (KVLLVEDNHT…ELHDELLHFK (116 aa)). Asp784 is subject to 4-aspartylphosphate.

In terms of assembly, binds the complex formed by the autoinducer and LuxP.

Its subcellular location is the cell inner membrane. It carries out the reaction ATP + protein L-histidine = ADP + protein N-phospho-L-histidine.. Its function is as follows. At low cell density, in absence of autoinducer has a kinase activity, and autophosphorylates on a histidine residue. The phosphoryl group is then transferred to an aspartate residue in the response regulator domain. The phosphoryl group is transferred to LuxU, and ultimately to LuxO. At high cell density, in the presence of autoinducer, the kinase activity is inactivated, and the response regulator domain has a phosphatase activity. The sequence is that of Autoinducer 2 sensor kinase/phosphatase LuxQ (luxQ) from Vibrio vulnificus (strain YJ016).